The following is a 509-amino-acid chain: ATP synthase subunit alpha (509 aa).

Residue 169–176 (GDRQTGKT) participates in ATP binding.

Belongs to the ATPase alpha/beta chains family. F-type ATPases have 2 components, CF(1) - the catalytic core - and CF(0) - the membrane proton channel. CF(1) has five subunits: alpha(3), beta(3), gamma(1), delta(1), epsilon(1). CF(0) has three main subunits: a(1), b(2) and c(9-12). The alpha and beta chains form an alternating ring which encloses part of the gamma chain. CF(1) is attached to CF(0) by a central stalk formed by the gamma and epsilon chains, while a peripheral stalk is formed by the delta and b chains.

It localises to the cell inner membrane. The enzyme catalyses ATP + H2O + 4 H(+)(in) = ADP + phosphate + 5 H(+)(out). Produces ATP from ADP in the presence of a proton gradient across the membrane. The alpha chain is a regulatory subunit. The polypeptide is ATP synthase subunit alpha (Methylobacterium nodulans (strain LMG 21967 / CNCM I-2342 / ORS 2060)).